The primary structure comprises 145 residues: Large ribosomal subunit protein uL13 (145 aa).

Belongs to the universal ribosomal protein uL13 family. In terms of assembly, part of the 50S ribosomal subunit.

Its function is as follows. This protein is one of the early assembly proteins of the 50S ribosomal subunit, although it is not seen to bind rRNA by itself. It is important during the early stages of 50S assembly. In Bacillus cytotoxicus (strain DSM 22905 / CIP 110041 / 391-98 / NVH 391-98), this protein is Large ribosomal subunit protein uL13.